A 207-amino-acid chain; its full sequence is MNPSRIRIKMCGMTRSEDIQYAIDLGVDAIGLIFYPKSARNVSLEKARIIVNNIPPFVDIVAVLVNPEQSFVQLIINEIPVQLLQFHGEESSEFCRQFNKPFIKAIHPKTAIQIQSAVDEFFDASAILLDTPSDKERGGTGLTFDWNIIPENLSKPYILAGGLNESNILEAITMCHPYAVDVCSGIEASPGVKDHLKMSRFIKAIWG.

This sequence belongs to the TrpF family.

It catalyses the reaction N-(5-phospho-beta-D-ribosyl)anthranilate = 1-(2-carboxyphenylamino)-1-deoxy-D-ribulose 5-phosphate. Its pathway is amino-acid biosynthesis; L-tryptophan biosynthesis; L-tryptophan from chorismate: step 3/5. This is N-(5'-phosphoribosyl)anthranilate isomerase from Legionella pneumophila (strain Paris).